Consider the following 179-residue polypeptide: MAQLSGTPDVPDMGRRQFMNLLTFGSATGVALGMLYPVVRYFIPPASGGVGGGVVAKDALGNDISVSDFLAKHPANDRALAQGLKGDPTYIVVQDDHTIGDYGLNAVCTHLGCVVPWNISENKFICPCHGSQYDNTGKVVRGPAPLSLALAHAAVSDDKITFTPWTETDFRTGKEPWWT.

Residues 21–43 (LLTFGSATGVALGMLYPVVRYFI) traverse the membrane as a helical segment. One can recognise a Rieske domain in the interval 61 to 162 (GNDISVSDFL…AAVSDDKITF (102 aa)). Residues C108, H110, C126, and H129 each coordinate [2Fe-2S] cluster. Cysteines 113 and 128 form a disulfide.

Belongs to the Rieske iron-sulfur protein family. As to quaternary structure, the 4 large subunits of the cytochrome b6-f complex are cytochrome b6, subunit IV (17 kDa polypeptide, PetD), cytochrome f and the Rieske protein, while the 4 small subunits are PetG, PetL, PetM and PetN. The complex functions as a dimer. Requires [2Fe-2S] cluster as cofactor.

The protein localises to the cellular thylakoid membrane. It catalyses the reaction 2 oxidized [plastocyanin] + a plastoquinol + 2 H(+)(in) = 2 reduced [plastocyanin] + a plastoquinone + 4 H(+)(out). Component of the cytochrome b6-f complex, which mediates electron transfer between photosystem II (PSII) and photosystem I (PSI), cyclic electron flow around PSI, and state transitions. The chain is Cytochrome b6-f complex iron-sulfur subunit from Cyanothece sp. (strain PCC 7425 / ATCC 29141).